A 2804-amino-acid polypeptide reads, in one-letter code: Nipped-B-like protein (2804 aa).

Composition is skewed to polar residues over residues 128-173 and 191-208; these read LSQN…QNSP and HPSSYTTHPQMQQASVSS. Residues 128–340 are disordered; sequence LSQNSMHSSP…LGKDEKEQSE (213 aa). Phosphoserine occurs at positions 150 and 162. Residues 234–249 show a composition bias toward basic and acidic residues; that stretch reads HHADNPRHGSSEDYLH. A phosphoserine mark is found at serine 243, serine 256, serine 274, serine 280, serine 284, serine 301, serine 306, and serine 318. Over residues 331-340 the composition is skewed to basic and acidic residues; the sequence is LGKDEKEQSE. Serine 350 bears the Phosphoserine mark. The span at 482 to 500 shows a compositional bias: basic and acidic residues; sequence RESAIERERFSKEVQDKDK. Residues 482–946 form a disordered region; the sequence is RESAIERERF…NKAEFPSYLL (465 aa). Positions 523-534 are enriched in polar residues; it reads PASQETGSTGNG. Composition is skewed to basic and acidic residues over residues 562–572, 593–663, 672–685, and 694–939; these read DSIKKPEEIKQ, PENH…ECKQ, KQNENRLSDTKPND, and ETTK…DNKA. 2 positions are modified to phosphothreonine: threonine 713 and threonine 746. Serine 912 is modified (phosphoserine). A PxVxL motif motif is present at residues 996–1009; sequence NKGAKPVVVLQKLS. Disordered regions lie at residues 1017 to 1047 and 1060 to 1191; these read IKDREDKSRSSLKPIKNKPSKSNKGSIDQSV and ESTM…LTPE. N6-acetyllysine is present on lysine 1082. Phosphoserine occurs at positions 1089, 1090, and 1096. Acidic residues predominate over residues 1089-1100; it reads SSDEDNDSDEAF. Over residues 1109 to 1139 the composition is skewed to basic and acidic residues; it reads KDDDKAWEYEERDRRSSGDHRRSGHSHEGRR. Residues serine 1150, serine 1152, and serine 1154 each carry the phosphoserine modification. A Phosphotyrosine modification is found at tyrosine 1159. A Phosphoserine modification is found at serine 1160. Basic residues predominate over residues 1171 to 1182; the sequence is KMKKKEKQKKRK. Threonine 1189 is modified (phosphothreonine). Serine 1197 carries the post-translational modification Phosphoserine. Positions 1691–1710 are disordered; sequence AMKSQKDEESSEGTHHAKEI. 5 HEAT repeats span residues 1767–1805, 1843–1881, 1945–1984, 2227–2267, and 2313–2351; these read AQSFDIYLTQILRVLGENAIAVRTKAMKCLSEVVAVDPS, PQLAEQYYDMLIERILDTGISVRKRVIKILRDICIEQPT, YDWFEQLLQNLLKSEEDSSYKPVKKACTQLVDNLVEHILK, VNLK…LKEM, and LIHPVQCVPYLIAMGTDPEPAMRNKADQQLVEIDKKYAG. Positions 2473–2489 are enriched in basic and acidic residues; the sequence is VKDKRKERKSSPSKENE. 2 disordered regions span residues 2473–2520 and 2651–2696; these read VKDK…DDIN and TSLL…DSTE. Residues serine 2493, serine 2509, serine 2511, serine 2513, serine 2515, serine 2652, and serine 2658 each carry the phosphoserine modification. Over residues 2510-2519 the composition is skewed to acidic residues; sequence DSDSDSEDDI. Threonine 2667 carries the post-translational modification Phosphothreonine. The residue at position 2672 (serine 2672) is a Phosphoserine.

This sequence belongs to the SCC2/Nipped-B family. As to quaternary structure, heterodimerizes with MAU2/SCC4 to form the cohesin loading complex. The NIPBL-MAU2 heterodimer interacts with the cohesin complex composed of SMC1A/B and SMC3 heterodimer, RAD21 and STAG1/SA1. NIPBL directly contacts all members of the complex, RAD21, SMC1A/B, SMC3 and STAG1. Interacts directly (via PxVxL motif) with CBX5. Interacts with ZNF609 (via N-terminus). Interacts with the multiprotein complex Integrator. Interacts (via PxVxL motif) with CBX3. Interacts with BRD4. In terms of tissue distribution, widely expressed. Highly expressed in heart, skeletal muscle, fetal and adult liver, fetal and adult kidney. Expressed at intermediates level in thymus, placenta, peripheral leukocyte and small intestine. Weakly or not expressed in brain, colon, spleen and lung.

The protein localises to the nucleus. The protein resides in the chromosome. Plays an important role in the loading of the cohesin complex on to DNA. Forms a heterodimeric complex (also known as cohesin loading complex) with MAU2/SCC4 which mediates the loading of the cohesin complex onto chromatin. Plays a role in cohesin loading at sites of DNA damage. Its recruitment to double-strand breaks (DSBs) sites occurs in a CBX3-, RNF8- and RNF168-dependent manner whereas its recruitment to UV irradiation-induced DNA damage sites occurs in a ATM-, ATR-, RNF8- and RNF168-dependent manner. Along with ZNF609, promotes cortical neuron migration during brain development by regulating the transcription of crucial genes in this process. Preferentially binds promoters containing paused RNA polymerase II. Up-regulates the expression of SEMA3A, NRP1, PLXND1 and GABBR2 genes, among others. The chain is Nipped-B-like protein (NIPBL) from Homo sapiens (Human).